The chain runs to 269 residues: G-protein coupled receptor homolog C3 (269 aa).

An intrachain disulfide couples cysteine 28 to cysteine 107. The next 5 membrane-spanning stretches (helical) occupy residues 30–50 (IMSVLYYVGFFSNMFIITLMS), 71–91 (IGILMCCSAWLLSLILSSPVS), 123–143 (LMQIEITILGFLIPIIIFVYC), 165–185 (IVLMIVVCSLICWIPLYIVLM), and 200–220 (HLCLYLNLAYAITFSETISLA).

This sequence belongs to the G-protein coupled receptor 1 family.

The protein resides in the host cell membrane. This is G-protein coupled receptor homolog C3 from Sus scrofa (Pig).